We begin with the raw amino-acid sequence, 437 residues long: Phosphoglucosamine mutase (437 aa).

Ser-93 functions as the Phosphoserine intermediate in the catalytic mechanism. Residues Ser-93, Asp-230, Asp-232, and Asp-234 each coordinate Mg(2+). The residue at position 93 (Ser-93) is a Phosphoserine.

This sequence belongs to the phosphohexose mutase family. Mg(2+) serves as cofactor. In terms of processing, activated by phosphorylation.

The enzyme catalyses alpha-D-glucosamine 1-phosphate = D-glucosamine 6-phosphate. Catalyzes the conversion of glucosamine-6-phosphate to glucosamine-1-phosphate. In Clavibacter michiganensis subsp. michiganensis (strain NCPPB 382), this protein is Phosphoglucosamine mutase.